We begin with the raw amino-acid sequence, 380 residues long: Cytochrome b (380 aa).

4 helical membrane-spanning segments follow: residues 33–53 (FGSLLGLCLITQILTGLFLAM), 77–98 (WLIRNLHANGASFFFICMYLHV), 113–133 (WNIGVILLLLVMMTAFVGYVL), and 178–198 (FFAFHFILPFIVAAAVILHLL). The heme b site is built by His83 and His97. The heme b site is built by His182 and His196. Position 201 (His201) interacts with a ubiquinone. 4 consecutive transmembrane segments (helical) span residues 226–246 (YKDILGFIVMLLALITLALFS), 288–308 (LGGVLALLFSILVLMIVPILH), 320–340 (FSQFLFWVLVADMLILTWIGG), and 347–367 (FIIIGQIASILYFTLFLLLIP).

The protein belongs to the cytochrome b family. In terms of assembly, the cytochrome bc1 complex contains 3 respiratory subunits (MT-CYB, CYC1 and UQCRFS1), 2 core proteins (UQCRC1 and UQCRC2) and probably 6 low-molecular weight proteins. Requires heme b as cofactor.

It is found in the mitochondrion inner membrane. Functionally, component of the ubiquinol-cytochrome c reductase complex (complex III or cytochrome b-c1 complex) that is part of the mitochondrial respiratory chain. The b-c1 complex mediates electron transfer from ubiquinol to cytochrome c. Contributes to the generation of a proton gradient across the mitochondrial membrane that is then used for ATP synthesis. The sequence is that of Cytochrome b (mt-cyb) from Arapaima gigas (Arapaima).